Consider the following 287-residue polypeptide: Light-independent protochlorophyllide reductase iron-sulfur ATP-binding protein (287 aa).

ATP contacts are provided by residues 10–15 (GVGKST) and K39. S14 serves as a coordination point for Mg(2+). [4Fe-4S] cluster contacts are provided by C95 and C129. Residue 181-182 (NR) coordinates ATP.

The protein belongs to the NifH/BchL/ChlL family. Homodimer. Protochlorophyllide reductase is composed of three subunits; BchL, BchN and BchB. The cofactor is [4Fe-4S] cluster.

The catalysed reaction is chlorophyllide a + oxidized 2[4Fe-4S]-[ferredoxin] + 2 ADP + 2 phosphate = protochlorophyllide a + reduced 2[4Fe-4S]-[ferredoxin] + 2 ATP + 2 H2O. The protein operates within porphyrin-containing compound metabolism; bacteriochlorophyll biosynthesis (light-independent). In terms of biological role, component of the dark-operative protochlorophyllide reductase (DPOR) that uses Mg-ATP and reduced ferredoxin to reduce ring D of protochlorophyllide (Pchlide) to form chlorophyllide a (Chlide). This reaction is light-independent. The L component serves as a unique electron donor to the NB-component of the complex, and binds Mg-ATP. The chain is Light-independent protochlorophyllide reductase iron-sulfur ATP-binding protein from Heliobacterium modesticaldum (strain ATCC 51547 / Ice1).